The primary structure comprises 545 residues: MNCSAFSFWFVCKIIFFFLSFHIQISIANPRENFLKCFSKHIPNNVANPKLVYTQHDQLYMSILNSTIQNLRFISDTTPKPLVIVTPSNNSHIQATILCSKKVGLQIRTRSGGHDAEGMSYISQVPFVVVDLRNMHSIKIDVHSQTAWVEAGATLGEVYYWINEKNENLSFPGGYCPTVGVGGHFSGGGYGALMRNYGLAADNIIDAHLVNVDGKVLDRKSMGEDLFWAIRGGGGENFGIIAAWKIKLVAVPSKSTIFSVKKNMEIHGLVKLFNKWQNIAYKYDKDLVLMTHFITKNITDNHGKNKTTVHGYFSSIFHGGVDSLVDLMNKSFPELGIKKTDCKEFSWIDTTIFYSGVVNFNTANFKKEILLDRSAGKKTAFSIKLDYVKKPIPETAMVKILEKLYEEDVGAGMYVLYPYGGIMEEISESAIPFPHRAGIMYELWYTASWEKQEDNEKHINWVRSVYNFTTPYVSQNPRLAYLNYRDLDLGKTNHASPNNYTQARIWGEKYFGKNFNRLVKVKTKVDPNNFFRNEQSIPPLPPHHH.

Positions 1 to 28 (MNCSAFSFWFVCKIIFFFLSFHIQISIA) are cleaved as a signal peptide. A disulfide bond links cysteine 37 and cysteine 99. Residues asparagine 65 and asparagine 89 are each glycosylated (N-linked (GlcNAc...) asparagine). Residues 77 to 251 (TTPKPLVIVT…AAWKIKLVAV (175 aa)) form the FAD-binding PCMH-type domain. Residues 109-115 (TRSGGHD) and serine 120 contribute to the FAD site. Residues 114-176 (HDAEGMSYIS…ENLSFPGGYC (63 aa)) constitute a cross-link (6-(S-cysteinyl)-8alpha-(pros-histidyl)-FAD (His-Cys)). Asparagine 168 carries an N-linked (GlcNAc...) asparagine glycan. FAD-binding positions include cysteine 176, 180-184 (GVGGH), tyrosine 190, glutamate 236, and isoleucine 241. A cannabigerolate-binding site is contributed by histidine 292. Asparagine 297, asparagine 305, and asparagine 329 each carry an N-linked (GlcNAc...) asparagine glycan. Residues tyrosine 417 and glutamate 442 each coordinate cannabigerolate. Asparagine 467 carries an N-linked (GlcNAc...) asparagine glycan. 481-483 (YLN) lines the FAD pocket. The active-site Proton acceptor is tyrosine 484. The N-linked (GlcNAc...) asparagine glycan is linked to asparagine 499.

Belongs to the oxygen-dependent FAD-linked oxidoreductase family. Monomer. The cofactor is FAD. Post-translationally, glycosylated when produced in a heterologous system. The deglycosylated THCA synthase has more catalytic activity than the glycosylated form. The FAD cofactor is bound via a bicovalent 6-S-cysteinyl, 8alpha-N1-histidyl FAD linkage. As to expression, expressed in the secretory cells of glandular trichomes.

The protein localises to the secreted. The protein resides in the extracellular space. It is found in the apoplast. The catalysed reaction is cannabigerolate + O2 = Delta(9)-tetrahydrocannabinolate + H2O2. Its pathway is secondary metabolite biosynthesis; terpenoid biosynthesis. Inhibited by Hg(2+). Oxidoreductase involved in the biosynthesis of cannabinoids-related terpenophenolic natural products, which have pharmacological activity. Catalyzes the oxidative cyclization of the monoterpene moiety in cannabigerolic acid (CBGA), producing delta(9)-tetrahydrocannabinolate (THCA), the major cannabioid in drug-type Cannabis plants. Can also use cannabinerolic acid as substrate, but not cannabigerol or cannabinerol. This is Tetrahydrocannabinolic acid synthase from Cannabis sativa (Hemp).